Consider the following 315-residue polypeptide: tRNA U34 carboxymethyltransferase (315 aa).

Carboxy-S-adenosyl-L-methionine-binding positions include Lys79, Trp93, Lys98, Gly117, 142–144 (DPS), 169–170 (VE), Tyr193, and Arg307.

Belongs to the class I-like SAM-binding methyltransferase superfamily. CmoB family. As to quaternary structure, homotetramer.

It catalyses the reaction carboxy-S-adenosyl-L-methionine + 5-hydroxyuridine(34) in tRNA = 5-carboxymethoxyuridine(34) in tRNA + S-adenosyl-L-homocysteine + H(+). Its function is as follows. Catalyzes carboxymethyl transfer from carboxy-S-adenosyl-L-methionine (Cx-SAM) to 5-hydroxyuridine (ho5U) to form 5-carboxymethoxyuridine (cmo5U) at position 34 in tRNAs. In Helicobacter hepaticus (strain ATCC 51449 / 3B1), this protein is tRNA U34 carboxymethyltransferase.